The chain runs to 564 residues: Dihydroxy-acid dehydratase (564 aa).

D80 is a binding site for Mg(2+). A [2Fe-2S] cluster-binding site is contributed by C121. Mg(2+) is bound by residues D122 and K123. K123 carries the post-translational modification N6-carboxylysine. C194 contributes to the [2Fe-2S] cluster binding site. Position 447 (E447) interacts with Mg(2+). S473 (proton acceptor) is an active-site residue.

The protein belongs to the IlvD/Edd family. As to quaternary structure, homodimer. [2Fe-2S] cluster serves as cofactor. Requires Mg(2+) as cofactor.

The enzyme catalyses (2R)-2,3-dihydroxy-3-methylbutanoate = 3-methyl-2-oxobutanoate + H2O. The catalysed reaction is (2R,3R)-2,3-dihydroxy-3-methylpentanoate = (S)-3-methyl-2-oxopentanoate + H2O. It participates in amino-acid biosynthesis; L-isoleucine biosynthesis; L-isoleucine from 2-oxobutanoate: step 3/4. Its pathway is amino-acid biosynthesis; L-valine biosynthesis; L-valine from pyruvate: step 3/4. In terms of biological role, functions in the biosynthesis of branched-chain amino acids. Catalyzes the dehydration of (2R,3R)-2,3-dihydroxy-3-methylpentanoate (2,3-dihydroxy-3-methylvalerate) into 2-oxo-3-methylpentanoate (2-oxo-3-methylvalerate) and of (2R)-2,3-dihydroxy-3-methylbutanoate (2,3-dihydroxyisovalerate) into 2-oxo-3-methylbutanoate (2-oxoisovalerate), the penultimate precursor to L-isoleucine and L-valine, respectively. The chain is Dihydroxy-acid dehydratase from Listeria monocytogenes serotype 4a (strain HCC23).